We begin with the raw amino-acid sequence, 421 residues long: C2 calcium-dependent domain-containing protein 4C (421 aa).

Disordered stretches follow at residues 13-97 (RGSG…AKLA), 119-140 (DWLS…SLPS), 158-228 (HTRR…SPFG), and 250-303 (VSQL…TVHV). The segment covering 215–228 (ESDTGSSAESSPFG) has biased composition (polar residues). Phosphoserine occurs at positions 262, 264, and 273. In terms of domain architecture, C2 spans 305–421 (PRGSVRLLAE…LPLTSLLPFL (117 aa)).

It belongs to the C2CD4 family.

This is C2 calcium-dependent domain-containing protein 4C (C2CD4C) from Homo sapiens (Human).